The chain runs to 211 residues: Protein FAM167A (211 aa).

2 disordered regions span residues 1-30 (MSVP…DHLR) and 56-108 (EEQT…GKLE). Residues 120–153 (LRKELMEMRLQDQQLARQLMRLRSDIHKLKIEQT) are a coiled coil.

This sequence belongs to the FAM167 (SEC) family.

This is Protein FAM167A (FAM167A) from Bos taurus (Bovine).